A 169-amino-acid polypeptide reads, in one-letter code: Phosphopantetheine adenylyltransferase (169 aa).

Residue threonine 9 coordinates substrate. ATP is bound by residues 9–10 (TF) and histidine 17. Substrate is bound by residues lysine 41, leucine 73, and arginine 87. Residues 88-90 (GLR), glutamate 98, and 123-129 (YQFISGT) contribute to the ATP site.

Belongs to the bacterial CoaD family. In terms of assembly, homohexamer. Requires Mg(2+) as cofactor.

It localises to the cytoplasm. It catalyses the reaction (R)-4'-phosphopantetheine + ATP + H(+) = 3'-dephospho-CoA + diphosphate. It functions in the pathway cofactor biosynthesis; coenzyme A biosynthesis; CoA from (R)-pantothenate: step 4/5. Functionally, reversibly transfers an adenylyl group from ATP to 4'-phosphopantetheine, yielding dephospho-CoA (dPCoA) and pyrophosphate. This Bordetella bronchiseptica (strain ATCC BAA-588 / NCTC 13252 / RB50) (Alcaligenes bronchisepticus) protein is Phosphopantetheine adenylyltransferase.